The chain runs to 700 residues: Elongation factor G (700 aa).

In terms of domain architecture, tr-type G spans 10-286 (NKVRNIGIMA…AVIDYLPNPL (277 aa)). Residues 19–26 (AHIDAGKT), 83–87 (DTPGH), and 137–140 (NKMD) contribute to the GTP site.

It belongs to the TRAFAC class translation factor GTPase superfamily. Classic translation factor GTPase family. EF-G/EF-2 subfamily.

The protein localises to the cytoplasm. Functionally, catalyzes the GTP-dependent ribosomal translocation step during translation elongation. During this step, the ribosome changes from the pre-translocational (PRE) to the post-translocational (POST) state as the newly formed A-site-bound peptidyl-tRNA and P-site-bound deacylated tRNA move to the P and E sites, respectively. Catalyzes the coordinated movement of the two tRNA molecules, the mRNA and conformational changes in the ribosome. The chain is Elongation factor G from Rhodococcus opacus (strain B4).